The chain runs to 257 residues: Asnovolin H dehydrogenase nvfC (257 aa).

A helical membrane pass occupies residues 7-26 (YVLIITGSASGIGLATATIA). Isoleucine 11 contacts NADP(+). N-linked (GlcNAc...) asparagine glycosylation is found at asparagine 57, asparagine 92, and asparagine 110. Arginine 119, tyrosine 151, lysine 155, and valine 184 together coordinate NADP(+). The active-site Proton donor is the tyrosine 151. Lysine 155 acts as the Lowers pKa of active site Tyr in catalysis.

This sequence belongs to the short-chain dehydrogenases/reductases (SDR) family.

It localises to the membrane. It carries out the reaction asnovolin H + A = chermesin D + AH2. It participates in secondary metabolite biosynthesis; terpenoid biosynthesis. Short chain dehydrogenase; part of the gene cluster that mediates the biosynthesis of novofumigatonin, a heavily oxygenated meroterpenoid containing a unique orthoester moiety. The first step of the pathway is the synthesis of 3,5-dimethylorsellinic acid (DMOA) by the polyketide synthase nvfA via condensation of one acetyl-CoA starter unit with 3 malonyl-CoA units and 2 methylations. DMOA is then converted to farnesyl-DMOA by the farnesyltransferase nvfB. Epoxydation by FAD-dependent monooxygenase nvfK, followed by a protonation-initiated cyclization catalyzed by the terpene cyclase nvfL leads to the production of asnavolin H. The short chain dehydrogenase nvfC then as a 3-OH dehydrogenase of asnovolin H to yield chemesin D. There are two branches to synthesize asnovolin A from chemesin D. In one branch, chemesin D undergoes Baeyer-Villiger oxidation by nvfH, methylation by nvfJ, and enoyl reduction by the nvfM D enoylreductase that reduces the double bond between C-5'and C-6', to form respectively asnovolin I, asnovolin K, and asnovolin A. In the other branch, the methylation precedes the Baeyer-Villiger oxidation and the enoyl reduction to yield asnovolin A via the asnovolin J intermediate. Asnovolin A is further converted to fumigatonoid A by the Fe(II)/2-oxoglutarate-dependent dioxygenase nvfI that catalyzes an endoperoxidation reaction. The alpha/beta hydrolase nvfD then acts as an epimerase that converts fumigatonoid A to its C-5' epimer, which then undergoes spontaneous or nvfD-catalyzed lactonization. The following step utilizes the ketoreductase nvfG to produce fumigatonoid B. The dioxygenase nvfE further converts fumigatonoid B into fumigatonoid C. Finally the Fe(II)/2-oxoglutarate-dependent dioxygenase nvfF catalyzes two rounds of oxidation to transform fumigatonoid C into the end product, novofumigatonin A. The chain is Asnovolin H dehydrogenase nvfC from Aspergillus novofumigatus (strain IBT 16806).